The chain runs to 383 residues: Polyketide synthase 4 (383 aa).

Cys-164 functions as the Nucleophile and monoketide coumarate intermediate in the catalytic mechanism.

This sequence belongs to the thiolase-like superfamily. Chalcone/stilbene synthases family. In terms of assembly, homodimer. In terms of tissue distribution, expressed in fruits.

The catalysed reaction is 4-coumaroyl-CoA + malonyl-CoA + H2O + H(+) = 4-hydroxybenzalacetone + 2 CO2 + 2 CoA. It catalyses the reaction (E)-4-coumaroyl-CoA + 3 malonyl-CoA + 3 H(+) = 2',4,4',6'-tetrahydroxychalcone + 3 CO2 + 4 CoA. It functions in the pathway secondary metabolite biosynthesis; flavonoid biosynthesis. With respect to regulation, inhibited by glutathione. Bifunctional polyketide synthase producing both 4-hydroxybenzalacetone and naringenin chalcone. Can use p-coumaryl-CoA and ferulyl-CoA as substrates. Catalyzes the initial key reaction step in the biosynthesis of phenylbutanoids. The sequence is that of Polyketide synthase 4 (PKS4) from Rubus idaeus (Raspberry).